Consider the following 154-residue polypeptide: Putative pre-16S rRNA nuclease (154 aa).

Belongs to the YqgF nuclease family.

The protein resides in the cytoplasm. Functionally, could be a nuclease involved in processing of the 5'-end of pre-16S rRNA. In Rickettsia bellii (strain OSU 85-389), this protein is Putative pre-16S rRNA nuclease.